We begin with the raw amino-acid sequence, 104 residues long: PTS system lactose-specific EIIA component (104 aa).

In terms of domain architecture, PTS EIIA type-3 spans 4–102 (EEATLLGFEI…MKHLIELYKR (99 aa)). His-78 acts as the Tele-phosphohistidine intermediate in catalysis. Phosphohistidine; by HPr is present on His-78. Asp-81 is a binding site for Mg(2+).

Homotrimer. Mg(2+) is required as a cofactor.

It localises to the cytoplasm. In terms of biological role, the phosphoenolpyruvate-dependent sugar phosphotransferase system (sugar PTS), a major carbohydrate active transport system, catalyzes the phosphorylation of incoming sugar substrates concomitantly with their translocation across the cell membrane. The enzyme II LacEF PTS system is involved in lactose transport. The polypeptide is PTS system lactose-specific EIIA component (Streptococcus mutans serotype c (strain ATCC 700610 / UA159)).